We begin with the raw amino-acid sequence, 1308 residues long: Chromosome partition protein Smc (1308 aa).

34–41 (PNGCGKSN) provides a ligand contact to ATP. The tract at residues 115 to 181 (AAREASMEEV…VAEGQPSDAQ (67 aa)) is disordered. Residues 137 to 169 (TEAEATEQQAAPSEGAAPTTEATAPSTENEAAP) show a composition bias toward low complexity. The stretch at 278-600 (ITKYKTKKRL…DTLRAEYATL (323 aa)) forms a coiled coil. In terms of domain architecture, SMC hinge spans 637 to 757 (AGVLADFLEV…VPDPAIGREL (121 aa)). Coiled-coil stretches lie at residues 791-1046 (SLKR…ELHA) and 1110-1148 (MALEEYKETAQRHEFLETQRKDLLDSIENTQNTIKEIDQ).

This sequence belongs to the SMC family. As to quaternary structure, homodimer.

The protein localises to the cytoplasm. Its function is as follows. Required for chromosome condensation and partitioning. The polypeptide is Chromosome partition protein Smc (Koribacter versatilis (strain Ellin345)).